The following is a 108-amino-acid chain: Putative disulfide oxidoreductase YuzD (108 aa).

C16 and C19 are oxidised to a cystine.

This Bacillus subtilis (strain 168) protein is Putative disulfide oxidoreductase YuzD (yuzD).